Reading from the N-terminus, the 473-residue chain is MAYQDFREFLAALEKEGQLLTVNEEVKPEPDLGASARAASNLGDKSPALLFNNIYGYHNARIAMNVIGSWPNHAMMLGMPKDTPVKEQFFEFAKRYDQFPMPVKREETAPFHENEITEDINLFDILPLFRINQGDGGYYLDKACVISRDLEDPDNFGKQNVGIYRMQVKGKDRLGIQPVPQHDIAIHLRQAEERGINLPVTIALGCEPVITTAASTPLLYDQSEYEMAGAIQGEPYRIVKSKLSDLDVPWGAEVVLEGEIIAGEREYEGPFGEFTGHYSGGRSMPIIKIKRVYHRNNPIFEHLYLGMPWTECDYMIGINTCVPLYQQLKEAYPNEIVAVNAMYTHGLIAIVSTKTRYGGFAKAVGMRALTTPHGLGYCKMVIVVDEDVDPFNLPQVMWALSTKMHPKHDAVIIPDLSVLPLDPGSNPSGITHKMILDATTPVAPETRGHYSQPLDSPLTTKEWEQKLMDLMNK.

Mn(2+)-binding residues include N160, H182, and E224. Residues 160 to 165 (NVGIYR) and 181 to 182 (QH) contribute to the prenylated FMN site. E273 (proton donor) is an active-site residue.

It belongs to the UbiD family. YclC subfamily. It depends on prenylated FMN as a cofactor. The cofactor is Mn(2+).

It carries out the reaction 4-hydroxybenzoate + H(+) = phenol + CO2. It catalyses the reaction vanillate + H(+) = guaiacol + CO2. Involved in the non-oxidative decarboxylation and detoxification of phenolic derivatives under both aerobic and anaerobic conditions. Phenolic acid decarboxylase that catalyzes the reversible decarboxylation of 4-hydroxybenzoate and vanillate. Could also catalyze the decarboxylation of salicylate. Is not active on di- and tri-hydroxybenzoate derivatives. The polypeptide is Phenolic acid decarboxylase (Bacillus subtilis (strain 168)).